We begin with the raw amino-acid sequence, 892 residues long: Translation initiation factor IF-2 (892 aa).

Basic and acidic residues predominate over residues 165-175; the sequence is EEQAELERQKT. 2 disordered regions span residues 165-250 and 264-300; these read EEQA…EDDS and ERAR…AHGF. Positions 208 to 222 are enriched in low complexity; that stretch reads PRAVRPAPAARPSVS. One can recognise a tr-type G domain in the interval 391–560; the sequence is PRPPVVTIMG…SIQAEVLELK (170 aa). GTP contacts are provided by residues 400-407, 446-450, and 500-503; these read GHVDHGKT, DTPGH, and SKID.

It belongs to the TRAFAC class translation factor GTPase superfamily. Classic translation factor GTPase family. IF-2 subfamily.

It localises to the cytoplasm. In terms of biological role, one of the essential components for the initiation of protein synthesis. Protects formylmethionyl-tRNA from spontaneous hydrolysis and promotes its binding to the 30S ribosomal subunits. Also involved in the hydrolysis of GTP during the formation of the 70S ribosomal complex. In Xylella fastidiosa (strain 9a5c), this protein is Translation initiation factor IF-2.